Consider the following 696-residue polypeptide: Elongation factor G (696 aa).

The region spanning 8–288 (EDYRNFGIMA…AVVEYLPSPA (281 aa)) is the tr-type G domain. GTP is bound by residues 17–24 (AHIDAGKT), 86–90 (DTPGH), and 140–143 (NKMD).

It belongs to the TRAFAC class translation factor GTPase superfamily. Classic translation factor GTPase family. EF-G/EF-2 subfamily.

The protein resides in the cytoplasm. Functionally, catalyzes the GTP-dependent ribosomal translocation step during translation elongation. During this step, the ribosome changes from the pre-translocational (PRE) to the post-translocational (POST) state as the newly formed A-site-bound peptidyl-tRNA and P-site-bound deacylated tRNA move to the P and E sites, respectively. Catalyzes the coordinated movement of the two tRNA molecules, the mRNA and conformational changes in the ribosome. This Mesorhizobium japonicum (strain LMG 29417 / CECT 9101 / MAFF 303099) (Mesorhizobium loti (strain MAFF 303099)) protein is Elongation factor G.